A 241-amino-acid polypeptide reads, in one-letter code: Methylthioribulose-1-phosphate dehydratase (241 aa).

Over residues 1 to 11 (MSSLCDTSNGE) the composition is skewed to polar residues. A disordered region spans residues 1 to 20 (MSSLCDTSNGESHADPCQDK). Cys-96 provides a ligand contact to substrate. Residues His-114 and His-116 each coordinate Zn(2+). Glu-138 acts as the Proton donor/acceptor in catalysis. Residue His-194 coordinates Zn(2+).

Belongs to the aldolase class II family. MtnB subfamily. Zn(2+) is required as a cofactor.

It is found in the cytoplasm. The catalysed reaction is 5-(methylsulfanyl)-D-ribulose 1-phosphate = 5-methylsulfanyl-2,3-dioxopentyl phosphate + H2O. It functions in the pathway amino-acid biosynthesis; L-methionine biosynthesis via salvage pathway; L-methionine from S-methyl-5-thio-alpha-D-ribose 1-phosphate: step 2/6. In terms of biological role, catalyzes the dehydration of methylthioribulose-1-phosphate (MTRu-1-P) into 2,3-diketo-5-methylthiopentyl-1-phosphate (DK-MTP-1-P). Functions in the methionine salvage pathway. May play a role in apoptosis. This chain is Methylthioribulose-1-phosphate dehydratase, found in Osmerus mordax (Rainbow smelt).